Reading from the N-terminus, the 314-residue chain is Replication initiation protein (314 aa).

A compositionally biased stretch (basic and acidic residues) spans 1 to 18; that stretch reads MSKKAEEIQAKQSLEKEN. The disordered stretch occupies residues 1 to 25; sequence MSKKAEEIQAKQSLEKENSNFSKTG.

Belongs to the plasmid replication initiation factor family.

Its function is as follows. This protein is probably a specific topoisomerase involved in initiating replication. This protein is specifically required and may be rate-limiting for replication of the plasmid in vivo. In Staphylococcus aureus, this protein is Replication initiation protein (repE).